The following is a 198-amino-acid chain: Ribonuclease HII (198 aa).

The region spanning 10-198 (HLVAGVDEVG…PVKRALGLVC (189 aa)) is the RNase H type-2 domain. 3 residues coordinate a divalent metal cation: Asp-16, Glu-17, and Asp-108.

It belongs to the RNase HII family. It depends on Mn(2+) as a cofactor. Requires Mg(2+) as cofactor.

The protein localises to the cytoplasm. The enzyme catalyses Endonucleolytic cleavage to 5'-phosphomonoester.. In terms of biological role, endonuclease that specifically degrades the RNA of RNA-DNA hybrids. The protein is Ribonuclease HII of Enterobacter sp. (strain 638).